Consider the following 438-residue polypeptide: MKPLHYTASALALGLALMGNAQAVTTIPFWHSMEGELGKEVDSLAQRFNAENPDYKIVPTYKGNYEQNLSAGIAVFRTGNAPAILQVYEVGTATMMASKAIKPVYDVFKEAGIQFDESQFVPTVSGYYSDSKTGHLLSQPFNSSTSVLYYNKDAFKKAGLDPEQPPKTWQDLADYSAKLKASGIKCGYASGWQGWIQLENFSAWNGLPFASKNNGFDGTDAVLEFNKPEQVKHIAMLEEMNKKGDFSYVGRKDESTEKFYNGDCAMTTASSGSLANIREYAKFNYGVGMMPYDADAKDAPQNAIIGGASLWVMQGKDKETYTGVAKFLDFLAKPENAAEWHQKTGYLPITKAAYDLTREQGFYEKNPGADTATRQMLNKPPLPFTKGLRLGNMPQIRVIVDEELESVWTGKKTPQQALDTAVERGNQLLRRFEKSTKS.

The N-terminal stretch at 1–23 is a signal peptide; sequence MKPLHYTASALALGLALMGNAQA. Positions 65, 89, 144, 270, 307, 346, and 397 each coordinate sn-glycerol 3-phosphate.

It belongs to the bacterial solute-binding protein 1 family. The complex is composed of two ATP-binding proteins (UgpC), two transmembrane proteins (UgpA and UgpE) and a solute-binding protein (UgpB).

It localises to the periplasm. Functionally, part of the ABC transporter complex UgpBAEC involved in sn-glycerol-3-phosphate (G3P) import. Binds G3P. This Shigella flexneri protein is sn-glycerol-3-phosphate-binding periplasmic protein UgpB (ugpB).